The chain runs to 323 residues: Ubiquinone biosynthesis protein COQ4, mitochondrial (323 aa).

The Zn(2+) site is built by histidine 203, aspartate 204, histidine 207, and glutamate 219.

Belongs to the COQ4 family. As to quaternary structure, component of a multi-subunit COQ enzyme complex, composed of at least COQ3, COQ4, COQ5, COQ6, COQ7 and COQ9. Zn(2+) serves as cofactor.

The protein resides in the mitochondrion inner membrane. The enzyme catalyses a 4-hydroxy-3-methoxy-5-(all-trans-polyprenyl)benzoate + H(+) = a 2-methoxy-6-(all-trans-polyprenyl)phenol + CO2. It functions in the pathway cofactor biosynthesis; ubiquinone biosynthesis. In terms of biological role, lyase that catalyzes the C1-decarboxylation of 4-hydroxy-3-methoxy-5-(all-trans-polyprenyl)benzoic acid into 2-methoxy-6-(all-trans-polyprenyl)phenol during ubiquinone biosynthesis. The polypeptide is Ubiquinone biosynthesis protein COQ4, mitochondrial (Eremothecium gossypii (strain ATCC 10895 / CBS 109.51 / FGSC 9923 / NRRL Y-1056) (Yeast)).